The sequence spans 313 residues: Ribosomal protein L11 methyltransferase (313 aa).

T161, G182, D204, and N247 together coordinate S-adenosyl-L-methionine.

It belongs to the methyltransferase superfamily. PrmA family.

The protein resides in the cytoplasm. The enzyme catalyses L-lysyl-[protein] + 3 S-adenosyl-L-methionine = N(6),N(6),N(6)-trimethyl-L-lysyl-[protein] + 3 S-adenosyl-L-homocysteine + 3 H(+). In terms of biological role, methylates ribosomal protein L11. This chain is Ribosomal protein L11 methyltransferase, found in Alkaliphilus oremlandii (strain OhILAs) (Clostridium oremlandii (strain OhILAs)).